The following is a 174-amino-acid chain: Repair DNA polymerase X (174 aa).

The tract at residues 42–51 (REEKMLNDVD) is involved in ssDNA binding. 2 residues coordinate Mg(2+): aspartate 49 and aspartate 51. A disulfide bridge connects residues cysteine 81 and cysteine 86. Aspartate 100 is a Mg(2+) binding site.

The protein belongs to the DNA polymerase type-X family. It depends on Mg(2+) as a cofactor.

It localises to the virion. It carries out the reaction DNA(n) + a 2'-deoxyribonucleoside 5'-triphosphate = DNA(n+1) + diphosphate. Error-prone polymerase lacking a proofreading 3'-5' exonuclease which catalyzes the gap-filling reaction during the DNA repair process. Specifically binds intermediates in the single-nucleotide base-excision repair process. Also catalyzes DNA polymerization with low nucleotide-insertion fidelity. Probably acts as a strategic DNA mutase, which gives rise to a rapid emergence of variants. Generates mismatched G-G pairs, in that case, the polymerase first binds the deoxynucleotide followed by mismatch formation. Together with the viral DNA ligase, fills the single nucleotide gaps generated by the AP endonuclease. Binds DNA with high affinity via the helix alphaE. This Ornithodoros (relapsing fever ticks) protein is Repair DNA polymerase X.